A 199-amino-acid chain; its full sequence is NAD(P)H dehydrogenase (quinone) (199 aa).

Residues 4-190 (VLVLYYSTYG…DGARFLGQHV (187 aa)) form the Flavodoxin-like domain. Residues 10 to 15 (STYGHI) and 78 to 80 (TRF) each bind FMN. Tyr-12 is an NAD(+) binding site. Trp-98 is a binding site for substrate. Residues 113-119 (STATQHG) and His-134 contribute to the FMN site.

It belongs to the WrbA family. FMN serves as cofactor.

The catalysed reaction is a quinone + NADH + H(+) = a quinol + NAD(+). The enzyme catalyses a quinone + NADPH + H(+) = a quinol + NADP(+). This Gluconacetobacter diazotrophicus (strain ATCC 49037 / DSM 5601 / CCUG 37298 / CIP 103539 / LMG 7603 / PAl5) protein is NAD(P)H dehydrogenase (quinone).